Here is a 275-residue protein sequence, read N- to C-terminus: NADPH-dependent 7-cyano-7-deazaguanine reductase (275 aa).

I81 to S83 contacts substrate. An NADPH-binding site is contributed by S83–K84. Residue C181 is the Thioimide intermediate of the active site. The Proton donor role is filled by D188. H220–E221 contributes to the substrate binding site. An NADPH-binding site is contributed by R249–G250.

The protein belongs to the GTP cyclohydrolase I family. QueF type 2 subfamily. Homodimer.

It is found in the cytoplasm. The enzyme catalyses 7-aminomethyl-7-carbaguanine + 2 NADP(+) = 7-cyano-7-deazaguanine + 2 NADPH + 3 H(+). The protein operates within tRNA modification; tRNA-queuosine biosynthesis. Its function is as follows. Catalyzes the NADPH-dependent reduction of 7-cyano-7-deazaguanine (preQ0) to 7-aminomethyl-7-deazaguanine (preQ1). The polypeptide is NADPH-dependent 7-cyano-7-deazaguanine reductase (Xylella fastidiosa (strain M23)).